The following is a 59-amino-acid chain: Transcription elongation factor Spt4 (59 aa).

The Zn(2+) site is built by Cys-4, Cys-7, Cys-16, and Cys-19.

Belongs to the archaeal Spt4 family. Heterodimer composed of Spt4 and Spt5.

Stimulates transcription elongation. This chain is Transcription elongation factor Spt4, found in Methanocaldococcus jannaschii (strain ATCC 43067 / DSM 2661 / JAL-1 / JCM 10045 / NBRC 100440) (Methanococcus jannaschii).